Consider the following 151-residue polypeptide: Nucleoside diphosphate kinase (151 aa).

The ATP site is built by Lys-9, Phe-57, Arg-86, Thr-92, Arg-103, and Asn-113. Catalysis depends on His-116, which acts as the Pros-phosphohistidine intermediate.

This sequence belongs to the NDK family. As to quaternary structure, homotetramer. Mg(2+) is required as a cofactor.

The protein localises to the cytoplasm. It catalyses the reaction a 2'-deoxyribonucleoside 5'-diphosphate + ATP = a 2'-deoxyribonucleoside 5'-triphosphate + ADP. The enzyme catalyses a ribonucleoside 5'-diphosphate + ATP = a ribonucleoside 5'-triphosphate + ADP. Functionally, major role in the synthesis of nucleoside triphosphates other than ATP. The ATP gamma phosphate is transferred to the NDP beta phosphate via a ping-pong mechanism, using a phosphorylated active-site intermediate. This is Nucleoside diphosphate kinase from Chloroflexus aggregans (strain MD-66 / DSM 9485).